The chain runs to 122 residues: Large ribosomal subunit protein uL18 (122 aa).

This sequence belongs to the universal ribosomal protein uL18 family. As to quaternary structure, part of the 50S ribosomal subunit; part of the 5S rRNA/L5/L18/L25 subcomplex. Contacts the 5S and 23S rRNAs.

Its function is as follows. This is one of the proteins that bind and probably mediate the attachment of the 5S RNA into the large ribosomal subunit, where it forms part of the central protuberance. The polypeptide is Large ribosomal subunit protein uL18 (Leptospira borgpetersenii serovar Hardjo-bovis (strain JB197)).